The primary structure comprises 409 residues: MAASVCRPYVRSLPGVMPWRSSSCHYEYTAMHHFLGSFQKLPFEPFNTGARKIHTAPVRSLFLLRPVPILLATGGGYAGYRQYEKYRDQKLEKLGLEIPPKLASHWEVALYKSVPTRLLSRAWGRLNQVELPYWLRRPVYSLYIWTFGVNMTEAAVEDLHHYRNLSEFFRRKLKPQARPVCGLHSVISPSDGKILTFGQVKNCEVEQVKGVTYSLESFLGPRTYTEDLSFPPASSRDSFRNQLVTREGNELYHCVIYLAPGDYHCFHSPTDWTVSHRRHFPGSLMSVNPGMARWIKELFCHNERVVLSGDWKHGFFSLTAVGATNVGSIRIYFDQDLHTNSPRYSKGSYNDLSFVTHANKEGIPMRKGEHLGEFNLGSTIVLIFEAPKDFNFRLKAGQKIRFGEALGSL.

The transit peptide at 1–52 (MAASVCRPYVRSLPGVMPWRSSSCHYEYTAMHHFLGSFQKLPFEPFNTGARK) directs the protein to the mitochondrion. Over 53–63 (IHTAPVRSLFL) the chain is Mitochondrial matrix. The chain crosses the membrane as a helical span at residues 64-82 (LRPVPILLATGGGYAGYRQ). Residues 83–409 (YEKYRDQKLE…IRFGEALGSL (327 aa)) are Mitochondrial intermembrane-facing. Catalysis depends on charge relay system; for autoendoproteolytic cleavage activity residues Asp-191, His-267, and Ser-378. The active-site Schiff-base intermediate with substrate; via pyruvic acid; for decarboxylase activity is the Ser-378. At Ser-378 the chain carries Pyruvic acid (Ser); by autocatalysis.

It belongs to the phosphatidylserine decarboxylase family. PSD-B subfamily. Eukaryotic type I sub-subfamily. Heterodimer of a large membrane-associated beta subunit and a small pyruvoyl-containing alpha subunit. Pyruvate is required as a cofactor. In terms of processing, is synthesized initially as an inactive proenzyme. Formation of the active enzyme involves a self-maturation process in which the active site pyruvoyl group is generated from an internal serine residue via an autocatalytic post-translational modification. Two non-identical subunits are generated from the proenzyme in this reaction, and the pyruvate is formed at the N-terminus of the alpha chain, which is derived from the carboxyl end of the proenzyme. The autoendoproteolytic cleavage occurs by a canonical serine protease mechanism, in which the side chain hydroxyl group of the serine supplies its oxygen atom to form the C-terminus of the beta chain, while the remainder of the serine residue undergoes an oxidative deamination to produce ammonia and the pyruvoyl prosthetic group on the alpha chain. During this reaction, the Ser that is part of the protease active site of the proenzyme becomes the pyruvoyl prosthetic group, which constitutes an essential element of the active site of the mature decarboxylase.

The protein localises to the mitochondrion inner membrane. The protein resides in the cytoplasm. Its subcellular location is the lipid droplet. The enzyme catalyses a 1,2-diacyl-sn-glycero-3-phospho-L-serine + H(+) = a 1,2-diacyl-sn-glycero-3-phosphoethanolamine + CO2. Its pathway is phospholipid metabolism; phosphatidylethanolamine biosynthesis. Its function is as follows. Catalyzes the formation of phosphatidylethanolamine (PtdEtn) from phosphatidylserine (PtdSer). Plays a central role in phospholipid metabolism and in the interorganelle trafficking of phosphatidylserine. May be involved in lipid droplet biogenesis at the endoplasmic reticulum membrane. The chain is Phosphatidylserine decarboxylase proenzyme, mitochondrial from Cricetulus griseus (Chinese hamster).